A 268-amino-acid polypeptide reads, in one-letter code: 4-hydroxy-tetrahydrodipicolinate reductase (268 aa).

8 to 13 is a binding site for NAD(+); it reads GAAGRM. R36 lines the NADP(+) pocket. NAD(+) is bound by residues 99-101 and 123-126; these read GTT and AANF. The Proton donor/acceptor role is filled by H156. H157 is a (S)-2,3,4,5-tetrahydrodipicolinate binding site. K160 (proton donor) is an active-site residue. A (S)-2,3,4,5-tetrahydrodipicolinate-binding site is contributed by 166 to 167; that stretch reads GT.

It belongs to the DapB family.

It localises to the cytoplasm. It carries out the reaction (S)-2,3,4,5-tetrahydrodipicolinate + NAD(+) + H2O = (2S,4S)-4-hydroxy-2,3,4,5-tetrahydrodipicolinate + NADH + H(+). The enzyme catalyses (S)-2,3,4,5-tetrahydrodipicolinate + NADP(+) + H2O = (2S,4S)-4-hydroxy-2,3,4,5-tetrahydrodipicolinate + NADPH + H(+). It functions in the pathway amino-acid biosynthesis; L-lysine biosynthesis via DAP pathway; (S)-tetrahydrodipicolinate from L-aspartate: step 4/4. Catalyzes the conversion of 4-hydroxy-tetrahydrodipicolinate (HTPA) to tetrahydrodipicolinate. This Pseudomonas fluorescens (strain Pf0-1) protein is 4-hydroxy-tetrahydrodipicolinate reductase.